We begin with the raw amino-acid sequence, 78 residues long: Large ribosomal subunit protein bL28 (78 aa).

The interval 1-23 is disordered; that stretch reads MSRVCQVTGKRPMVGNNRSHAKN.

It belongs to the bacterial ribosomal protein bL28 family.

The polypeptide is Large ribosomal subunit protein bL28 (Shewanella pealeana (strain ATCC 700345 / ANG-SQ1)).